The primary structure comprises 184 residues: Peptide deformylase (184 aa).

The Fe cation site is built by cysteine 111 and histidine 154. Glutamate 155 is an active-site residue. Fe cation is bound at residue histidine 158.

This sequence belongs to the polypeptide deformylase family. The cofactor is Fe(2+).

It carries out the reaction N-terminal N-formyl-L-methionyl-[peptide] + H2O = N-terminal L-methionyl-[peptide] + formate. In terms of biological role, removes the formyl group from the N-terminal Met of newly synthesized proteins. Requires at least a dipeptide for an efficient rate of reaction. N-terminal L-methionine is a prerequisite for activity but the enzyme has broad specificity at other positions. The chain is Peptide deformylase from Pediococcus pentosaceus (strain ATCC 25745 / CCUG 21536 / LMG 10740 / 183-1w).